A 422-amino-acid polypeptide reads, in one-letter code: S-adenosylmethionine synthase (422 aa).

H16 serves as a coordination point for ATP. Residue D18 coordinates Mg(2+). E44 contributes to the K(+) binding site. Positions 57 and 100 each coordinate L-methionine. The tract at residues 100–110 (QSPDISQGVSA) is flexible loop. ATP contacts are provided by residues 175–177 (DGK), 251–252 (KF), D260, 266–267 (RK), A283, and K287. D260 is a binding site for L-methionine. K291 contributes to the L-methionine binding site.

Belongs to the AdoMet synthase family. In terms of assembly, homotetramer; dimer of dimers. Requires Mg(2+) as cofactor. The cofactor is K(+).

The protein localises to the cytoplasm. The enzyme catalyses L-methionine + ATP + H2O = S-adenosyl-L-methionine + phosphate + diphosphate. Its pathway is amino-acid biosynthesis; S-adenosyl-L-methionine biosynthesis; S-adenosyl-L-methionine from L-methionine: step 1/1. Functionally, catalyzes the formation of S-adenosylmethionine (AdoMet) from methionine and ATP. The overall synthetic reaction is composed of two sequential steps, AdoMet formation and the subsequent tripolyphosphate hydrolysis which occurs prior to release of AdoMet from the enzyme. In Rippkaea orientalis (strain PCC 8801 / RF-1) (Cyanothece sp. (strain PCC 8801)), this protein is S-adenosylmethionine synthase.